Consider the following 479-residue polypeptide: MRVLHVCSELFPLLKTGGLADVAGALPGAQIAAGMDVRVILPAFPDLKKGIANLQVVRELDTFAGHVTLLFGHFNGVGIYLIDVPELYERAGSPYHDPALYAYADNYLRFALLGWMGCEMACGLDHYWRPDIVHAHDWHAGLTCAYLAARNRPAKSVFTVHNLAYQGLFAAGHMANLHLPSDFFQVYGLEFYGQISYLKAGLFYADHITTVSPTYAHEITLPAYGYGMEGLLKTREEEGRLSGILNGVDETIWNPTHDPLLTNHYSREALANKAENKRHLQTAMGLKVDDKAPVFAIVSRLTSQKGLDIALSAIPDLLEQGGQLVVLGAGDADLQEGFLAAAAEYHGQVGVQIGYHEAFSHRIIGGADVIMVPSRFEPCGLTQLYGLKYGTLPLVRRTGGLADTVSDCSLENLADGLASGFVFNDCSVGSLSRAIRRVFVLWSRPTLWRYVQRQAMAMDFGWQVSAQAYGALYQRLHTH.

Lysine 15 lines the ADP-alpha-D-glucose pocket.

This sequence belongs to the glycosyltransferase 1 family. Bacterial/plant glycogen synthase subfamily.

It carries out the reaction [(1-&gt;4)-alpha-D-glucosyl](n) + ADP-alpha-D-glucose = [(1-&gt;4)-alpha-D-glucosyl](n+1) + ADP + H(+). Its pathway is glycan biosynthesis; glycogen biosynthesis. Its function is as follows. Synthesizes alpha-1,4-glucan chains using ADP-glucose. This Pectobacterium atrosepticum (strain SCRI 1043 / ATCC BAA-672) (Erwinia carotovora subsp. atroseptica) protein is Glycogen synthase.